Here is a 213-residue protein sequence, read N- to C-terminus: Cytochrome b6 (213 aa).

Residues Ile-30–Ile-50 form a helical membrane-spanning segment. Cys-33 is a heme c binding site. Heme b is bound by residues His-84 and His-98. Transmembrane regions (helical) follow at residues Cys-88 to Phe-108, Leu-114 to Tyr-134, and Leu-184 to Ile-204. Residues His-185 and His-200 each contribute to the heme b site.

It belongs to the cytochrome b family. PetB subfamily. The subunits of the cytochrome bc complex are a Rieske Fe-S protein (PetC), cytochrome b6 (PetB), subunit IV (PetD), and a diheme cytochrome c (PetX). It depends on heme b as a cofactor. Heme c is required as a cofactor.

The protein localises to the cell membrane. Component of the cytochrome bc complex which donates electrons to the photosynthetic reaction center. The protein is Cytochrome b6 of Heliomicrobium gestii (Heliobacterium gestii).